Consider the following 403-residue polypeptide: Esterase LipC (403 aa).

Residues Ser237, Asp334, and His367 contribute to the active site.

It belongs to the 'GDXG' lipolytic enzyme family.

The protein resides in the cell surface. The protein localises to the secreted. It localises to the cell wall. Its subcellular location is the capsule. It catalyses the reaction a fatty acid ester + H2O = an aliphatic alcohol + a fatty acid + H(+). It carries out the reaction a butanoate ester + H2O = an aliphatic alcohol + butanoate + H(+). The enzyme catalyses a hexanoate ester + H2O = an aliphatic alcohol + hexanoate + H(+). The catalysed reaction is an acetyl ester + H2O = an aliphatic alcohol + acetate + H(+). It catalyses the reaction an octanoate ester + H2O = an aliphatic alcohol + octanoate + H(+). It carries out the reaction decanoate ester + H2O = decanoate + an aliphatic alcohol + H(+). Its function is as follows. Esterase that can hydrolyze short-chain esters with the carbon chain containing 2 to 10 carbon atoms. Does not have lipase activity. Is highly immunogenic and elicits strong humoral immune responses in both HIV-negative (HIV-) and HIV-positive (HIV+) tuberculosis (TB) patients. Also elicits pro-inflammatory cytokine and chemokine responses from macrophages and pulmonary epithelial cells. May participate in the progression of active tuberculosis both by contributing to the utilization of lipid substrates for bacterial growth and replication, and by modulating immune responses. The polypeptide is Esterase LipC (Mycobacterium tuberculosis (strain ATCC 25618 / H37Rv)).